The following is a 249-amino-acid chain: CDP-diacylglycerol pyrophosphatase (249 aa).

A helical transmembrane segment spans residues 5 to 25 (GYFLLAVIVIVAAAGVGYWKF).

This sequence belongs to the Cdh family.

The protein resides in the cell inner membrane. The catalysed reaction is a CDP-1,2-diacyl-sn-glycerol + H2O = a 1,2-diacyl-sn-glycero-3-phosphate + CMP + 2 H(+). Its pathway is phospholipid metabolism; CDP-diacylglycerol degradation; phosphatidate from CDP-diacylglycerol: step 1/1. The sequence is that of CDP-diacylglycerol pyrophosphatase from Salmonella arizonae (strain ATCC BAA-731 / CDC346-86 / RSK2980).